A 677-amino-acid polypeptide reads, in one-letter code: DNA ligase (677 aa).

Residues D35–D39, S85–L86, and E110 each bind NAD(+). K112 acts as the N6-AMP-lysine intermediate in catalysis. NAD(+)-binding residues include R133 and E173. Residues Q189–K210 form a disordered region. NAD(+)-binding residues include K289 and K313. Zn(2+) is bound by residues C407, C410, C426, and C432. Residues I596–V677 enclose the BRCT domain.

This sequence belongs to the NAD-dependent DNA ligase family. LigA subfamily. Requires Mg(2+) as cofactor. Mn(2+) is required as a cofactor.

The enzyme catalyses NAD(+) + (deoxyribonucleotide)n-3'-hydroxyl + 5'-phospho-(deoxyribonucleotide)m = (deoxyribonucleotide)n+m + AMP + beta-nicotinamide D-nucleotide.. Its function is as follows. DNA ligase that catalyzes the formation of phosphodiester linkages between 5'-phosphoryl and 3'-hydroxyl groups in double-stranded DNA using NAD as a coenzyme and as the energy source for the reaction. It is essential for DNA replication and repair of damaged DNA. The polypeptide is DNA ligase (Corynebacterium diphtheriae (strain ATCC 700971 / NCTC 13129 / Biotype gravis)).